The sequence spans 880 residues: Interference hedgehog (880 aa).

Positions 1–20 (MTLLTSSLLLFSLLTSRLEA) are cleaved as a signal peptide. Residues 21 to 703 (IPVLEKSPAH…ETFNMSPMLT (683 aa)) lie on the Extracellular side of the membrane. 4 Ig-like C2-type domains span residues 45–142 (PGVR…TARL), 132–232 (PLVV…ERIQ), 252–340 (PHLL…YIKV), and 346–432 (PQIV…LQVN). 4 cysteine pairs are disulfide-bonded: C68–C126, C173–C220, C276–C324, and C367–C414. N-linked (GlcNAc...) asparagine glycans are attached at residues N102 and N209. The segment at 426-467 (GTLLQVNPKQIQEPRESGGTHRPKPNQGSKQKQMYPPTPPNV) is disordered. 2 Fibronectin type-III domains span residues 461–567 (PPTP…LQPG) and 575–670 (VPEL…TQRP). N466 carries N-linked (GlcNAc...) asparagine glycosylation. Positions 497, 501, 503, and 541 each coordinate heparin. Residue N557 is glycosylated (N-linked (GlcNAc...) asparagine). The segment at 662–697 (LKQGRTQRPKTSTTEEPTLQMGDRDTTTPSHNETFN) is disordered. Polar residues-rich tracts occupy residues 665–678 (GRTQ…TEEP) and 688–697 (TTPSHNETFN). N-linked (GlcNAc...) asparagine glycosylation occurs at N693. A helical membrane pass occupies residues 704–724 (GTIGGGAVLILLLISTCLCVC). Over 725–880 (RRRTSRSRGN…SSGSLNSVGV (156 aa)) the chain is Cytoplasmic. Disordered regions lie at residues 728–762 (TSRS…QRQR) and 775–880 (QQQQ…SVGV). 2 stretches are compositionally biased toward low complexity: residues 823–837 (RAGG…NNNN) and 864–880 (SSRS…SVGV).

Belongs to the immunoglobulin superfamily. IHOG family. In terms of assembly, homodimer. Heterotetramer; 2 iHog chains bind 2 hh chains when facilitated by heparin, heparin is required to promote high-affinity interactions between hh and iHog.

The protein localises to the membrane. In terms of biological role, mediates response to the active Hedgehog (Hh) protein signal in embryos, functioning upstream or at the level of patched (ptc). This is Interference hedgehog from Drosophila sechellia (Fruit fly).